We begin with the raw amino-acid sequence, 128 residues long: MRHRVKTKKLNRYASHRKALLNNLARSVFESESIITTTAKAKAVRPLVERIITKAKEANSTDLPERRVALNRDINKHFNDRKLVYKIVHEIAPRYENRNGGYTRILKIGYRKGDASELSILQLLPKEE.

It belongs to the bacterial ribosomal protein bL17 family. As to quaternary structure, part of the 50S ribosomal subunit. Contacts protein L32.

The protein is Large ribosomal subunit protein bL17 of Petrotoga mobilis (strain DSM 10674 / SJ95).